The sequence spans 348 residues: Fructose-1,6-bisphosphatase class 1 (348 aa).

Mg(2+) is bound by residues Glu104, Asp126, Leu128, and Asp129. Substrate is bound by residues 129 to 132 (DGSS), Asn221, Tyr249, and Lys279. Glu285 is a binding site for Mg(2+).

Belongs to the FBPase class 1 family. In terms of assembly, homotetramer. Mg(2+) serves as cofactor.

The protein localises to the cytoplasm. It catalyses the reaction beta-D-fructose 1,6-bisphosphate + H2O = beta-D-fructose 6-phosphate + phosphate. The protein operates within carbohydrate biosynthesis; Calvin cycle. This chain is Fructose-1,6-bisphosphatase class 1, found in Thermosynechococcus vestitus (strain NIES-2133 / IAM M-273 / BP-1).